The primary structure comprises 197 residues: MIIGLTGGIASGKSTVVEIIKDARYKVIDADQLVHDMQVKGGRLYQALLDWLGYGILLPNGELNRPKLGQLIFSSEEMRYQSAEIQGKIIREELAAKRDCLAKEDDVFFMDIPLLFENDYQDWFDQIWLVAVSPQVQCQRLMKRNHLSAEEAGMRIASQMPLAEKLPYASLVIDNNGNIDDLKKKVKGAIKDLANLV.

Residues 2 to 197 (IIGLTGGIAS…GAIKDLANLV (196 aa)) form the DPCK domain. 10 to 15 (ASGKST) is an ATP binding site.

Belongs to the CoaE family.

It localises to the cytoplasm. It carries out the reaction 3'-dephospho-CoA + ATP = ADP + CoA + H(+). Its pathway is cofactor biosynthesis; coenzyme A biosynthesis; CoA from (R)-pantothenate: step 5/5. Functionally, catalyzes the phosphorylation of the 3'-hydroxyl group of dephosphocoenzyme A to form coenzyme A. The sequence is that of Dephospho-CoA kinase from Streptococcus thermophilus (strain CNRZ 1066).